The chain runs to 28 residues: Ranatuerin-2AVa (28 aa).

C23 and C28 form a disulfide bridge.

In terms of tissue distribution, expressed by the skin glands.

Its subcellular location is the secreted. Functionally, has antibacterial activity against the Gram positive bacterium L.lactis. The sequence is that of Ranatuerin-2AVa from Rana arvalis (Moor frog).